The chain runs to 191 residues: Fe/S biogenesis protein NfuA (191 aa).

[4Fe-4S] cluster is bound by residues C149 and C152.

This sequence belongs to the NfuA family. Homodimer. [4Fe-4S] cluster is required as a cofactor.

In terms of biological role, involved in iron-sulfur cluster biogenesis. Binds a 4Fe-4S cluster, can transfer this cluster to apoproteins, and thereby intervenes in the maturation of Fe/S proteins. Could also act as a scaffold/chaperone for damaged Fe/S proteins. This is Fe/S biogenesis protein NfuA from Buchnera aphidicola subsp. Baizongia pistaciae (strain Bp).